The primary structure comprises 128 residues: Large ribosomal subunit protein bL12 (128 aa).

This sequence belongs to the bacterial ribosomal protein bL12 family. As to quaternary structure, homodimer. Part of the ribosomal stalk of the 50S ribosomal subunit. Forms a multimeric L10(L12)X complex, where L10 forms an elongated spine to which 2 to 4 L12 dimers bind in a sequential fashion. Binds GTP-bound translation factors.

Its function is as follows. Forms part of the ribosomal stalk which helps the ribosome interact with GTP-bound translation factors. Is thus essential for accurate translation. This Corynebacterium efficiens (strain DSM 44549 / YS-314 / AJ 12310 / JCM 11189 / NBRC 100395) protein is Large ribosomal subunit protein bL12.